Here is a 283-residue protein sequence, read N- to C-terminus: Elongation factor Ts (283 aa).

Positions 79–82 are involved in Mg(2+) ion dislocation from EF-Tu; it reads TDFV.

This sequence belongs to the EF-Ts family.

The protein resides in the cytoplasm. In terms of biological role, associates with the EF-Tu.GDP complex and induces the exchange of GDP to GTP. It remains bound to the aminoacyl-tRNA.EF-Tu.GTP complex up to the GTP hydrolysis stage on the ribosome. The polypeptide is Elongation factor Ts (Shewanella frigidimarina (strain NCIMB 400)).